We begin with the raw amino-acid sequence, 142 residues long: Serine protease inhibitor (142 aa).

At serine 1 the chain carries N-acetylserine.

Functionally, serine protease inhibitor. Active against beta-trypsin and alpha-chymotrypsin with dissociation constants of 0.35 nM and 40 nM respectively. Inhibits factor XIa, but not other enzymes involved in coagulation and fibrinolysis. Does not inhibit subtilisin, lysyl endopeptidase, arginyl endopeptidase or papain. The polypeptide is Serine protease inhibitor (Lentinula edodes (Shiitake mushroom)).